Here is a 383-residue protein sequence, read N- to C-terminus: 3-dehydroquinate synthase (383 aa).

NAD(+) is bound by residues 81 to 86, 115 to 119, 139 to 140, Lys152, and Lys161; these read EGEVSK, GVVGD, and TS. Zn(2+) contacts are provided by Glu194, His256, and His274.

The protein belongs to the sugar phosphate cyclases superfamily. Dehydroquinate synthase family. Requires Co(2+) as cofactor. The cofactor is Zn(2+). NAD(+) is required as a cofactor.

It localises to the cytoplasm. The catalysed reaction is 7-phospho-2-dehydro-3-deoxy-D-arabino-heptonate = 3-dehydroquinate + phosphate. The protein operates within metabolic intermediate biosynthesis; chorismate biosynthesis; chorismate from D-erythrose 4-phosphate and phosphoenolpyruvate: step 2/7. Its function is as follows. Catalyzes the conversion of 3-deoxy-D-arabino-heptulosonate 7-phosphate (DAHP) to dehydroquinate (DHQ). The chain is 3-dehydroquinate synthase from Nitrobacter winogradskyi (strain ATCC 25391 / DSM 10237 / CIP 104748 / NCIMB 11846 / Nb-255).